Consider the following 393-residue polypeptide: Pectate lyase A (393 aa).

The N-terminal stretch at Met1–Ala32 is a signal peptide. Ca(2+)-binding residues include Glu174, Asp176, Asp216, and Asp220. The active site involves Arg273. A disulfide bridge connects residues Cys330 and Cys358.

This sequence belongs to the polysaccharide lyase 1 family. PLADES subfamily. Ca(2+) is required as a cofactor.

It is found in the secreted. It catalyses the reaction Eliminative cleavage of (1-&gt;4)-alpha-D-galacturonan to give oligosaccharides with 4-deoxy-alpha-D-galact-4-enuronosyl groups at their non-reducing ends.. It participates in glycan metabolism; pectin degradation; 2-dehydro-3-deoxy-D-gluconate from pectin: step 2/5. Functionally, involved in maceration and soft-rotting of plant tissue. In Dickeya chrysanthemi (Pectobacterium chrysanthemi), this protein is Pectate lyase A (pelA).